Reading from the N-terminus, the 706-residue chain is MVRKHGWQLPAHTLQVIAITVFCLLVVAFYAFFAPFVGGRIWEYVLIGVYSPVAILVFVLYVRCTAINPADPRIMSIFDTGVNGDGMVRGLSRNYDETGSQLQASPSVVSRSSTVAGNSSVKGSVEDAQRVESVSRRSCYNPLAVFCYVFVVEDCRKKEGPAEEQGNSEEALFCTLCNCEVRKFSKHCRSCDKCVDCFDHHCKWLNNCVGRKNYVTFVSLMSASLLWLIIEAAVGIAVIVRVFVNKQTMETEIVNRLGNSFSRAPLAAVVGLCTAVAIFACFPLGELLFFHMLLIKKGITTYEYVVAMRAMSEAPDGASVDEEIQNVLYSPTGSATTGFSGGSSLGLPYRGVWCTPPRVFDNQDEVIPHLDPCMVPSTVDPDAPGSEKGTKALKRPVKRNAWKLAKLDPNEAARAAARARASSSVLRPIDNRHLPDNDLSSIGTVSIISSVSTDANVAASKEIRNNDLRSSLSRNSFAPSQGSRDEYDTGSHGMSNLSSPSHVHESVTLAPLPQNPTIVGNRFTATSHHMHSTFDDKVLHRGNDADPLFLFAPATSHLRDVRKTSVVWDPEAGRYVSAPVTTTSEVRNRLLNPSSQTASTQNPRPILPAHDSSSGSSALRDPLPLHQAERRLTYTGDSIFYGGPLINIPTRDTPRSGRGLVRDVQDRLASTVHRDARIRRDSTSNQLPVFAPGGLGANSQTGSNIK.

The next 2 membrane-spanning stretches (helical) occupy residues 16-36 and 41-61; these read VIAI…FAPF and IWEY…FVLY. Residues 172 to 222 enclose the DHHC domain; that stretch reads LFCTLCNCEVRKFSKHCRSCDKCVDCFDHHCKWLNNCVGRKNYVTFVSLMS. Residue Cys-202 is the S-palmitoyl cysteine intermediate of the active site. Helical transmembrane passes span 220 to 240 and 275 to 295; these read LMSA…AVIV and AVAI…MLLI. Disordered stretches follow at residues 470 to 505, 591 to 621, and 680 to 706; these read SSLS…HVHE, LNPS…ALRD, and RDST…SNIK. 3 stretches are compositionally biased toward polar residues: residues 492-501, 591-603, and 697-706; these read HGMSNLSSPS, LNPS…TQNP, and ANSQTGSNIK.

It belongs to the DHHC palmitoyltransferase family.

The protein localises to the cell membrane. Its subcellular location is the cytoplasmic vesicle membrane. It catalyses the reaction L-cysteinyl-[protein] + hexadecanoyl-CoA = S-hexadecanoyl-L-cysteinyl-[protein] + CoA. In terms of biological role, palmitoyl acyltransferase. This chain is Probable protein S-acyltransferase 20 (PAT20), found in Arabidopsis thaliana (Mouse-ear cress).